Consider the following 348-residue polypeptide: Aspartate carbamoyltransferase catalytic subunit (348 aa).

Carbamoyl phosphate contacts are provided by Arg-59 and Thr-60. Lys-87 serves as a coordination point for L-aspartate. Residues Arg-109, His-142, and Gln-145 each contribute to the carbamoyl phosphate site. 2 residues coordinate L-aspartate: Arg-182 and Arg-253. The carbamoyl phosphate site is built by Gly-294 and Pro-295.

Belongs to the aspartate/ornithine carbamoyltransferase superfamily. ATCase family. As to quaternary structure, heterododecamer (2C3:3R2) of six catalytic PyrB chains organized as two trimers (C3), and six regulatory PyrI chains organized as three dimers (R2).

The catalysed reaction is carbamoyl phosphate + L-aspartate = N-carbamoyl-L-aspartate + phosphate + H(+). It participates in pyrimidine metabolism; UMP biosynthesis via de novo pathway; (S)-dihydroorotate from bicarbonate: step 2/3. Its function is as follows. Catalyzes the condensation of carbamoyl phosphate and aspartate to form carbamoyl aspartate and inorganic phosphate, the committed step in the de novo pyrimidine nucleotide biosynthesis pathway. The chain is Aspartate carbamoyltransferase catalytic subunit from Prochlorococcus marinus (strain MIT 9313).